We begin with the raw amino-acid sequence, 249 residues long: Aspartate/glutamate leucyltransferase (249 aa).

This sequence belongs to the R-transferase family. Bpt subfamily.

It localises to the cytoplasm. The catalysed reaction is N-terminal L-glutamyl-[protein] + L-leucyl-tRNA(Leu) = N-terminal L-leucyl-L-glutamyl-[protein] + tRNA(Leu) + H(+). It carries out the reaction N-terminal L-aspartyl-[protein] + L-leucyl-tRNA(Leu) = N-terminal L-leucyl-L-aspartyl-[protein] + tRNA(Leu) + H(+). In terms of biological role, functions in the N-end rule pathway of protein degradation where it conjugates Leu from its aminoacyl-tRNA to the N-termini of proteins containing an N-terminal aspartate or glutamate. The protein is Aspartate/glutamate leucyltransferase of Brucella abortus (strain S19).